Consider the following 254-residue polypeptide: Leucyl/phenylalanyl-tRNA--protein transferase (254 aa).

The protein belongs to the L/F-transferase family.

The protein resides in the cytoplasm. It catalyses the reaction N-terminal L-lysyl-[protein] + L-leucyl-tRNA(Leu) = N-terminal L-leucyl-L-lysyl-[protein] + tRNA(Leu) + H(+). The catalysed reaction is N-terminal L-arginyl-[protein] + L-leucyl-tRNA(Leu) = N-terminal L-leucyl-L-arginyl-[protein] + tRNA(Leu) + H(+). It carries out the reaction L-phenylalanyl-tRNA(Phe) + an N-terminal L-alpha-aminoacyl-[protein] = an N-terminal L-phenylalanyl-L-alpha-aminoacyl-[protein] + tRNA(Phe). Its function is as follows. Functions in the N-end rule pathway of protein degradation where it conjugates Leu, Phe and, less efficiently, Met from aminoacyl-tRNAs to the N-termini of proteins containing an N-terminal arginine or lysine. This Burkholderia lata (strain ATCC 17760 / DSM 23089 / LMG 22485 / NCIMB 9086 / R18194 / 383) protein is Leucyl/phenylalanyl-tRNA--protein transferase.